A 38-amino-acid polypeptide reads, in one-letter code: Large ribosomal subunit protein bL36 (38 aa).

It belongs to the bacterial ribosomal protein bL36 family.

The chain is Large ribosomal subunit protein bL36 from Acholeplasma laidlawii (strain PG-8A).